The following is a 71-amino-acid chain: Large ribosomal subunit protein bL31 (71 aa).

4 residues coordinate Zn(2+): Cys16, Cys18, Cys37, and Cys40.

The protein belongs to the bacterial ribosomal protein bL31 family. Type A subfamily. As to quaternary structure, part of the 50S ribosomal subunit. Zn(2+) is required as a cofactor.

Its function is as follows. Binds the 23S rRNA. This Yersinia pseudotuberculosis serotype O:1b (strain IP 31758) protein is Large ribosomal subunit protein bL31.